The following is a 179-amino-acid chain: UPF0302 protein BPUM_1989 (179 aa).

It belongs to the UPF0302 family.

This chain is UPF0302 protein BPUM_1989, found in Bacillus pumilus (strain SAFR-032).